Consider the following 910-residue polypeptide: Leucine--tRNA ligase (910 aa).

Positions 50–60 match the 'HIGH' region motif; it reads PYTNGSLHVGH. The short motif at 611–615 is the 'KMSKS' region element; that stretch reads KISKS. Lysine 614 contacts ATP.

The protein belongs to the class-I aminoacyl-tRNA synthetase family.

It is found in the cytoplasm. It catalyses the reaction tRNA(Leu) + L-leucine + ATP = L-leucyl-tRNA(Leu) + AMP + diphosphate. This is Leucine--tRNA ligase from Thermoplasma acidophilum (strain ATCC 25905 / DSM 1728 / JCM 9062 / NBRC 15155 / AMRC-C165).